Consider the following 335-residue polypeptide: Aliphatic sulfonates import ATP-binding protein SsuB (335 aa).

Residues 48-71 form a disordered region; sequence PFASGGAFGRAPRDDDDDRRGAGD. One can recognise an ABC transporter domain in the interval 74-293; it reads VRLTRVSKRY…ARASAAFAEL (220 aa). 106 to 113 is an ATP binding site; that stretch reads GRSGCGKS.

It belongs to the ABC transporter superfamily. Aliphatic sulfonates importer (TC 3.A.1.17.2) family. The complex is composed of two ATP-binding proteins (SsuB), two transmembrane proteins (SsuC) and a solute-binding protein (SsuA).

The protein localises to the cell inner membrane. The enzyme catalyses ATP + H2O + aliphatic sulfonate-[sulfonate-binding protein]Side 1 = ADP + phosphate + aliphatic sulfonateSide 2 + [sulfonate-binding protein]Side 1.. In terms of biological role, part of the ABC transporter complex SsuABC involved in aliphatic sulfonates import. Responsible for energy coupling to the transport system. This is Aliphatic sulfonates import ATP-binding protein SsuB from Burkholderia thailandensis (strain ATCC 700388 / DSM 13276 / CCUG 48851 / CIP 106301 / E264).